The sequence spans 71 residues: Small ribosomal subunit protein bS21 (71 aa).

This sequence belongs to the bacterial ribosomal protein bS21 family.

In Ruthia magnifica subsp. Calyptogena magnifica, this protein is Small ribosomal subunit protein bS21.